Here is a 300-residue protein sequence, read N- to C-terminus: Ribosomal protein L11 methyltransferase (300 aa).

Residues Thr148, Gly171, Asp193, and Asn235 each coordinate S-adenosyl-L-methionine.

Belongs to the methyltransferase superfamily. PrmA family.

It is found in the cytoplasm. It catalyses the reaction L-lysyl-[protein] + 3 S-adenosyl-L-methionine = N(6),N(6),N(6)-trimethyl-L-lysyl-[protein] + 3 S-adenosyl-L-homocysteine + 3 H(+). Its function is as follows. Methylates ribosomal protein L11. The sequence is that of Ribosomal protein L11 methyltransferase from Desulfotalea psychrophila (strain LSv54 / DSM 12343).